Consider the following 133-residue polypeptide: Profilin-2 (133 aa).

The cysteines at positions 13 and 117 are disulfide-linked. Positions 83–99 (AVIRGKKGSGGITIKKT) match the Involved in PIP2 interaction motif. The residue at position 113 (Thr-113) is a Phosphothreonine.

This sequence belongs to the profilin family. As to quaternary structure, occurs in many kinds of cells as a complex with monomeric actin in a 1:1 ratio. Phosphorylated by MAP kinases.

It localises to the cytoplasm. Its subcellular location is the cytoskeleton. In terms of biological role, binds to actin and affects the structure of the cytoskeleton. At high concentrations, profilin prevents the polymerization of actin, whereas it enhances it at low concentrations. The protein is Profilin-2 of Corylus avellana (European hazel).